The sequence spans 345 residues: Neurotrimin (345 aa).

The first 30 residues, 1-30, serve as a signal peptide directing secretion; the sequence is MGVCGSLFLPWKCLVVVSLRLLFLVPTGVP. Ig-like C2-type domains lie at 39–126, 136–218, and 222–309; these read PKAM…PKTS, PKIV…VKVT, and PPYI…ASIT. N-linked (GlcNAc...) asparagine glycans are attached at residues N44, N70, and N152. C57 and C115 are oxidised to a cystine. 2 cysteine pairs are disulfide-bonded: C157-C201 and C243-C295. N-linked (GlcNAc...) asparagine glycans are attached at residues N284, N292, N305, and N321. Residue N321 is the site of GPI-anchor amidated asparagine attachment. Residues 322–345 constitute a propeptide, removed in mature form; sequence GTSSRRAGCLWLLPLLVLHLLLKF.

The protein belongs to the immunoglobulin superfamily. IgLON family.

The protein resides in the cell membrane. In terms of biological role, neural cell adhesion molecule. The sequence is that of Neurotrimin (NTM) from Bos taurus (Bovine).